A 303-amino-acid chain; its full sequence is N-acetyl-D-glucosamine kinase (303 aa).

ATP-binding positions include 4–11 (GFDIGGTK) and 133–140 (GVGGGLIF). The Zn(2+) site is built by histidine 157, cysteine 177, cysteine 179, and cysteine 184.

Belongs to the ROK (NagC/XylR) family. NagK subfamily.

The catalysed reaction is N-acetyl-D-glucosamine + ATP = N-acetyl-D-glucosamine 6-phosphate + ADP + H(+). Its pathway is cell wall biogenesis; peptidoglycan recycling. In terms of biological role, catalyzes the phosphorylation of N-acetyl-D-glucosamine (GlcNAc) derived from cell-wall degradation, yielding GlcNAc-6-P. The polypeptide is N-acetyl-D-glucosamine kinase (Escherichia coli O127:H6 (strain E2348/69 / EPEC)).